Reading from the N-terminus, the 684-residue chain is Threonine--tRNA ligase (684 aa).

One can recognise a TGS domain in the interval 1 to 66 (MTVPATDSCP…DTDAEVVPVA (66 aa)). A catalytic region spans residues 261 to 567 (DHRKLGSELD…LTEHYAGAFP (307 aa)). Positions 366, 417, and 544 each coordinate Zn(2+).

Belongs to the class-II aminoacyl-tRNA synthetase family. As to quaternary structure, homodimer. Requires Zn(2+) as cofactor.

It is found in the cytoplasm. It catalyses the reaction tRNA(Thr) + L-threonine + ATP = L-threonyl-tRNA(Thr) + AMP + diphosphate + H(+). Catalyzes the attachment of threonine to tRNA(Thr) in a two-step reaction: L-threonine is first activated by ATP to form Thr-AMP and then transferred to the acceptor end of tRNA(Thr). Also edits incorrectly charged L-seryl-tRNA(Thr). In Mycolicibacterium paratuberculosis (strain ATCC BAA-968 / K-10) (Mycobacterium paratuberculosis), this protein is Threonine--tRNA ligase.